We begin with the raw amino-acid sequence, 105 residues long: Large ribosomal subunit protein uL24 (105 aa).

The protein belongs to the universal ribosomal protein uL24 family. Part of the 50S ribosomal subunit.

Functionally, one of two assembly initiator proteins, it binds directly to the 5'-end of the 23S rRNA, where it nucleates assembly of the 50S subunit. Its function is as follows. One of the proteins that surrounds the polypeptide exit tunnel on the outside of the subunit. The chain is Large ribosomal subunit protein uL24 from Mycobacterium sp. (strain JLS).